The primary structure comprises 207 residues: Na(+)-translocating NADH-quinone reductase subunit D (207 aa).

A run of 6 helical transmembrane segments spans residues Ile-20 to Ala-40, Phe-41 to Ile-61, Ile-69 to Leu-89, Val-102 to Met-122, Phe-130 to Leu-150, and Asn-177 to Ile-197.

This sequence belongs to the NqrDE/RnfAE family. As to quaternary structure, composed of six subunits; NqrA, NqrB, NqrC, NqrD, NqrE and NqrF.

The protein resides in the cell inner membrane. It carries out the reaction a ubiquinone + n Na(+)(in) + NADH + H(+) = a ubiquinol + n Na(+)(out) + NAD(+). NQR complex catalyzes the reduction of ubiquinone-1 to ubiquinol by two successive reactions, coupled with the transport of Na(+) ions from the cytoplasm to the periplasm. NqrA to NqrE are probably involved in the second step, the conversion of ubisemiquinone to ubiquinol. This Haemophilus ducreyi (strain 35000HP / ATCC 700724) protein is Na(+)-translocating NADH-quinone reductase subunit D.